A 166-amino-acid chain; its full sequence is Protein UL5 (166 aa).

Belongs to the RL11 family. Interacts with host IQGAP1.

It is found in the host cytoplasm. May play a role in rearrangement of cellular cytoskeleton towards an efficient viral assembly and spreading. The chain is Protein UL5 (UL5) from Human cytomegalovirus (strain AD169) (HHV-5).